We begin with the raw amino-acid sequence, 432 residues long: Trigger factor (432 aa).

One can recognise a PPIase FKBP-type domain in the interval 161–246 (GSRATIDFVG…LNKVEARELP (86 aa)).

The protein belongs to the FKBP-type PPIase family. Tig subfamily.

The protein localises to the cytoplasm. It catalyses the reaction [protein]-peptidylproline (omega=180) = [protein]-peptidylproline (omega=0). Functionally, involved in protein export. Acts as a chaperone by maintaining the newly synthesized protein in an open conformation. Functions as a peptidyl-prolyl cis-trans isomerase. The polypeptide is Trigger factor (Vibrio atlanticus (strain LGP32) (Vibrio splendidus (strain Mel32))).